Reading from the N-terminus, the 854-residue chain is Selenocysteine insertion sequence-binding protein 2 (854 aa).

Disordered regions lie at residues 332–351 (ADPK…DPSY), 356–394 (HIIH…KYEV), 417–445 (ERRD…KKSQ), and 488–619 (ECAS…PNHT). 2 stretches are compositionally biased toward polar residues: residues 338 to 350 (SIPS…SDPS) and 361 to 372 (TQKSKASQGSDL). The Nuclear localization signal motif lies at 380–387 (KNKKKKEK). Over residues 426–445 (KFQSKQQPQDNFKNNVKKSQ) the composition is skewed to polar residues. A compositionally biased stretch (basic and acidic residues) spans 536–547 (ILKERQERKQRL). The span at 548–559 (QENAVSPAFTSD) shows a compositional bias: polar residues. Over residues 560–572 (DTQDGESGGDDQF) the composition is skewed to acidic residues. Residues 593-611 (VEDKSEEPPGTELQRDTEA) show a composition bias toward basic and acidic residues. The interval 673-694 (LVLGLREVLKHLKLKKLKCVII) is RNA-binding. Residues 787-812 (EPRPQAPPSLPTQGPSCPAEDGPPAL) form a disordered region.

Expressed at high levels in testis.

The protein resides in the nucleus. It localises to the mitochondrion. In terms of biological role, mRNA-binding protein that binds to the SECIS (selenocysteine insertion sequence) element present in the 3'-UTR of mRNAs encoding selenoproteins and facilitates the incorporation of the rare amino acid selenocysteine. Insertion of selenocysteine at UGA codons is mediated by SECISBP2 and EEFSEC: SECISBP2 (1) specifically binds the SECIS sequence once the 80S ribosome encounters an in-frame UGA codon and (2) contacts the RPS27A/eS31 of the 40S ribosome before ribosome stalling. (3) GTP-bound EEFSEC then delivers selenocysteinyl-tRNA(Sec) to the 80S ribosome and adopts a preaccommodated state conformation. (4) After GTP hydrolysis, EEFSEC dissociates from the assembly, selenocysteinyl-tRNA(Sec) accommodates, and peptide bond synthesis and selenoprotein elongation occur. This chain is Selenocysteine insertion sequence-binding protein 2, found in Homo sapiens (Human).